Consider the following 452-residue polypeptide: Pup--protein ligase (452 aa).

Glu-9 contacts Mg(2+). Arg-53 contacts ATP. Tyr-55 provides a ligand contact to Mg(2+). Asp-57 (proton acceptor) is an active-site residue. Glu-63 contributes to the Mg(2+) binding site. ATP-binding residues include Thr-66 and Trp-419.

This sequence belongs to the Pup ligase/Pup deamidase family. Pup-conjugating enzyme subfamily. Post-translationally, pupylated at an undetermined lysine residue by the prokaryotic ubiquitin-like protein Pup, which leads to its degradation by the proteasome and thereby constitutes a negative auto-regulation.

The enzyme catalyses ATP + [prokaryotic ubiquitin-like protein]-L-glutamate + [protein]-L-lysine = ADP + phosphate + N(6)-([prokaryotic ubiquitin-like protein]-gamma-L-glutamyl)-[protein]-L-lysine.. The protein operates within protein degradation; proteasomal Pup-dependent pathway. It participates in protein modification; protein pupylation. In terms of biological role, catalyzes the covalent attachment of the prokaryotic ubiquitin-like protein modifier Pup to the proteasomal substrate proteins, thereby targeting them for proteasomal degradation. This tagging system is termed pupylation. The ligation reaction likely involves the side-chain carboxylate of the C-terminal glutamate of Pup and the side-chain amino group of a substrate lysine. This chain is Pup--protein ligase (pafA), found in Mycolicibacterium smegmatis (strain ATCC 700084 / mc(2)155) (Mycobacterium smegmatis).